The sequence spans 201 residues: Small ribosomal subunit protein uS4 (201 aa).

The 61-residue stretch at 91–151 folds into the S4 RNA-binding domain; it reads SRLDNVVYRA…EKSQKMNWFE (61 aa).

Belongs to the universal ribosomal protein uS4 family. As to quaternary structure, part of the 30S ribosomal subunit. Contacts protein S5. The interaction surface between S4 and S5 is involved in control of translational fidelity.

Its function is as follows. One of the primary rRNA binding proteins, it binds directly to 16S rRNA where it nucleates assembly of the body of the 30S subunit. In terms of biological role, with S5 and S12 plays an important role in translational accuracy. This is Small ribosomal subunit protein uS4 from Corynebacterium efficiens (strain DSM 44549 / YS-314 / AJ 12310 / JCM 11189 / NBRC 100395).